The sequence spans 136 residues: Protein NrdI (136 aa).

It belongs to the NrdI family.

Probably involved in ribonucleotide reductase function. This chain is Protein NrdI, found in Escherichia coli O7:K1 (strain IAI39 / ExPEC).